The sequence spans 201 residues: Small ribosomal subunit protein uS4c (201 aa).

The segment at 15–44 (LGALPGLTSKRPRSGSDLRNQSRSGKKSQY) is disordered. In terms of domain architecture, S4 RNA-binding spans 89 to 150 (MRLDNILFRL…EQRSRALIQN (62 aa)).

The protein belongs to the universal ribosomal protein uS4 family. Part of the 30S ribosomal subunit. Contacts protein S5. The interaction surface between S4 and S5 is involved in control of translational fidelity.

It localises to the plastid. Its subcellular location is the chloroplast. In terms of biological role, one of the primary rRNA binding proteins, it binds directly to 16S rRNA where it nucleates assembly of the body of the 30S subunit. Its function is as follows. With S5 and S12 plays an important role in translational accuracy. This chain is Small ribosomal subunit protein uS4c (rps4), found in Calycanthus floridus var. glaucus (Eastern sweetshrub).